The following is a 274-amino-acid chain: Bis(5'-nucleosyl)-tetraphosphatase, symmetrical (274 aa).

It belongs to the Ap4A hydrolase family.

It catalyses the reaction P(1),P(4)-bis(5'-adenosyl) tetraphosphate + H2O = 2 ADP + 2 H(+). In terms of biological role, hydrolyzes diadenosine 5',5'''-P1,P4-tetraphosphate to yield ADP. The chain is Bis(5'-nucleosyl)-tetraphosphatase, symmetrical from Shewanella baltica (strain OS185).